The following is a 280-amino-acid chain: Equatorin (280 aa).

Positions 1–19 (MDFILLIFLSGVFLPNIFS) are cleaved as a signal peptide. The Vesicular segment spans residues 20-183 (LQPTVEQDPG…LSELEEIKLK (164 aa)). Residues 112–131 (ATASGEEDKRSEPSRKSSTP) form a disordered region. Over residues 117–126 (EEDKRSEPSR) the composition is skewed to basic and acidic residues. A glycan (N-linked (GlcNAc...) asparagine) is linked at Asn-145. Residues 184–204 (LMLGISLMTLILLIPLLIFCF) traverse the membrane as a helical segment. The Cytoplasmic portion of the chain corresponds to 205 to 280 (ATLYKLRHLR…AEVTEERISE (76 aa)). At Ser-279 the chain carries Phosphoserine.

In terms of assembly, interacts with SNAP25. In terms of processing, highly N- and O-glycosylated; contains sialic acid. As to expression, highly expressed in testis and epididymis. Low expression in other tissues.

It is found in the cytoplasmic vesicle. The protein localises to the secretory vesicle. Its subcellular location is the acrosome membrane. The protein resides in the acrosome inner membrane. It localises to the acrosome outer membrane. In terms of biological role, acrosomal membrane-anchored protein involved in the process of fertilization and in acrosome biogenesis. In Rattus norvegicus (Rat), this protein is Equatorin (Eqtn).